A 457-amino-acid polypeptide reads, in one-letter code: Glutamyl-tRNA reductase (457 aa).

Residues 49-52 (TCNR), serine 109, 114-116 (ETQ), and glutamine 120 each bind substrate. The Nucleophile role is filled by cysteine 50. 189-194 (GAGKMG) is a binding site for NADP(+).

Belongs to the glutamyl-tRNA reductase family. In terms of assembly, homodimer.

It catalyses the reaction (S)-4-amino-5-oxopentanoate + tRNA(Glu) + NADP(+) = L-glutamyl-tRNA(Glu) + NADPH + H(+). It participates in porphyrin-containing compound metabolism; protoporphyrin-IX biosynthesis; 5-aminolevulinate from L-glutamyl-tRNA(Glu): step 1/2. In terms of biological role, catalyzes the NADPH-dependent reduction of glutamyl-tRNA(Glu) to glutamate 1-semialdehyde (GSA). This Oceanobacillus iheyensis (strain DSM 14371 / CIP 107618 / JCM 11309 / KCTC 3954 / HTE831) protein is Glutamyl-tRNA reductase.